Here is a 157-residue protein sequence, read N- to C-terminus: Small ribosomal subunit protein uS13 (157 aa).

Belongs to the universal ribosomal protein uS13 family. As to quaternary structure, part of the 30S ribosomal subunit. Forms a loose heterodimer with protein S19. Forms two bridges to the 50S subunit in the 70S ribosome.

Functionally, located at the top of the head of the 30S subunit, it contacts several helices of the 16S rRNA. In the 70S ribosome it contacts the 23S rRNA (bridge B1a) and protein L5 of the 50S subunit (bridge B1b), connecting the 2 subunits; these bridges are implicated in subunit movement. This Thermofilum pendens (strain DSM 2475 / Hrk 5) protein is Small ribosomal subunit protein uS13.